We begin with the raw amino-acid sequence, 93 residues long: MDIRTLALFSILLGSLCLSEGKPVSLVYRCPCRYFESNVPKSNIKHLKILSTSNCSLQIVARLKHNGKQICLDPKTKWIQEYLEKALNKKVKT.

Positions 1–21 (MDIRTLALFSILLGSLCLSEG) are cleaved as a signal peptide. Residues 22 to 23 (KP) carry the Receptor activation motif motif. Residues 29-33 (RCPCR) are receptor and heparin binding. Cystine bridges form between Cys-30–Cys-55 and Cys-32–Cys-71. Heparin is bound by residues 41–51 (KSNIKHLKILS), Arg-62, Gln-69, and Lys-85. 2 receptor binding regions span residues 48-50 (KIL) and 60-64 (VARLK).

This sequence belongs to the intercrine alpha (chemokine CxC) family. Monomer or homodimer; in equilibrium. Dimer formation is induced by non acidic pH and the presence of multivalent anions, and by binding to cxcr4 or heparin.

Its subcellular location is the secreted. Its function is as follows. Chemoattractant. Activates the C-X-C chemokine receptor cxcr4 to induce a rapid and transient rise in the level of intracellular calcium ions, and chemotaxis. Signaling with cxcr4 mediates the directional movement of mesodermal cells during gastrulation. Binds to the allosteric site (site 2) of integrins and activates them in a cxcr4-independent manner. The sequence is that of Stromal cell-derived factor 1 from Xenopus tropicalis (Western clawed frog).